A 128-amino-acid polypeptide reads, in one-letter code: Large ribosomal subunit protein bL12 (128 aa).

It belongs to the bacterial ribosomal protein bL12 family. As to quaternary structure, homodimer. Part of the ribosomal stalk of the 50S ribosomal subunit. Forms a multimeric L10(L12)X complex, where L10 forms an elongated spine to which 2 to 4 L12 dimers bind in a sequential fashion. Binds GTP-bound translation factors.

Its function is as follows. Forms part of the ribosomal stalk which helps the ribosome interact with GTP-bound translation factors. Is thus essential for accurate translation. In Synechococcus sp. (strain CC9311), this protein is Large ribosomal subunit protein bL12.